The following is a 2103-amino-acid chain: uncharacterized protein (2103 aa).

Low complexity predominate over residues 1-12 (MSVPGTPGAMEP). The segment at 1–61 (MSVPGTPGAM…DADDQEEEME (61 aa)) is disordered. A compositionally biased stretch (acidic residues) spans 51–61 (EDADDQEEEME). The Bromo domain occupies 77–196 (YELQQGYRIL…MMLEQKLALL (120 aa)). Disordered stretches follow at residues 730–750 (AKHKKHKSGKKSVSKKAITKK), 853–881 (NRELWTTDEGEGDLGKDSPKGEISKSIDS), 933–956 (QSKQTDYVDDSTKELSPRKKAKLS), 1224–1244 (SASPTISSTGQPLSSTTTLNG), and 1770–1817 (GATR…STSP). The segment covering 865–877 (DLGKDSPKGEISK) has biased composition (basic and acidic residues). A compositionally biased stretch (polar residues) spans 1224–1234 (SASPTISSTGQ). Residues 1235-1244 (PLSSTTTLNG) show a composition bias toward low complexity. Over residues 1773–1794 (RSVSISKRQSRTSLQFHSPGIS) the composition is skewed to polar residues. Positions 1795-1808 (TTVPTNVNTNKPQT) are enriched in low complexity.

It is found in the nucleus. This is an uncharacterized protein from Homo sapiens (Human).